We begin with the raw amino-acid sequence, 154 residues long: Large ribosomal subunit protein uL23 (154 aa).

The protein belongs to the universal ribosomal protein uL23 family.

Functionally, this protein binds to a specific region on the 26S rRNA. In Daucus carota (Wild carrot), this protein is Large ribosomal subunit protein uL23 (RPL23A).